Consider the following 435-residue polypeptide: 3-phosphoshikimate 1-carboxyvinyltransferase (435 aa).

3 residues coordinate 3-phosphoshikimate: lysine 25, serine 26, and arginine 30. A phosphoenolpyruvate-binding site is contributed by lysine 25. The phosphoenolpyruvate site is built by glycine 99 and arginine 130. 3-phosphoshikimate contacts are provided by serine 176, serine 177, glutamine 178, serine 204, aspartate 319, asparagine 342, and lysine 346. Glutamine 178 contributes to the phosphoenolpyruvate binding site. Aspartate 319 serves as the catalytic Proton acceptor. Phosphoenolpyruvate is bound by residues arginine 350, arginine 394, and lysine 419.

This sequence belongs to the EPSP synthase family. Monomer.

The protein localises to the cytoplasm. The enzyme catalyses 3-phosphoshikimate + phosphoenolpyruvate = 5-O-(1-carboxyvinyl)-3-phosphoshikimate + phosphate. Its pathway is metabolic intermediate biosynthesis; chorismate biosynthesis; chorismate from D-erythrose 4-phosphate and phosphoenolpyruvate: step 6/7. Its function is as follows. Catalyzes the transfer of the enolpyruvyl moiety of phosphoenolpyruvate (PEP) to the 5-hydroxyl of shikimate-3-phosphate (S3P) to produce enolpyruvyl shikimate-3-phosphate and inorganic phosphate. The polypeptide is 3-phosphoshikimate 1-carboxyvinyltransferase (Haemophilus ducreyi (strain 35000HP / ATCC 700724)).